We begin with the raw amino-acid sequence, 190 residues long: dCTP deaminase (190 aa).

DCTP-binding positions include 113–118 (KSTYAR), 137–139 (TLE), Q158, Y172, and Q182. The Proton donor/acceptor role is filled by E139.

The protein belongs to the dCTP deaminase family. As to quaternary structure, homotrimer.

It catalyses the reaction dCTP + H2O + H(+) = dUTP + NH4(+). Its pathway is pyrimidine metabolism; dUMP biosynthesis; dUMP from dCTP (dUTP route): step 1/2. Functionally, catalyzes the deamination of dCTP to dUTP. This chain is dCTP deaminase, found in Chromobacterium violaceum (strain ATCC 12472 / DSM 30191 / JCM 1249 / CCUG 213 / NBRC 12614 / NCIMB 9131 / NCTC 9757 / MK).